The primary structure comprises 421 residues: UDP-N-acetylglucosamine 1-carboxyvinyltransferase (421 aa).

Lysine 22–asparagine 23 lines the phosphoenolpyruvate pocket. Arginine 92 is a UDP-N-acetyl-alpha-D-glucosamine binding site. Catalysis depends on cysteine 116, which acts as the Proton donor. Residue cysteine 116 is modified to 2-(S-cysteinyl)pyruvic acid O-phosphothioketal. UDP-N-acetyl-alpha-D-glucosamine-binding residues include aspartate 306 and valine 328.

Belongs to the EPSP synthase family. MurA subfamily.

The protein localises to the cytoplasm. It catalyses the reaction phosphoenolpyruvate + UDP-N-acetyl-alpha-D-glucosamine = UDP-N-acetyl-3-O-(1-carboxyvinyl)-alpha-D-glucosamine + phosphate. The protein operates within cell wall biogenesis; peptidoglycan biosynthesis. Its function is as follows. Cell wall formation. Adds enolpyruvyl to UDP-N-acetylglucosamine. The protein is UDP-N-acetylglucosamine 1-carboxyvinyltransferase of Thermotoga petrophila (strain ATCC BAA-488 / DSM 13995 / JCM 10881 / RKU-1).